Consider the following 148-residue polypeptide: MDNFIQELQRLFPDLEVREGVDVPALVVPADQLLALMTELKEKRGFNFLADLTAVDYPEDERIEMVYHLLSVPGMAEIRVKVNLDRQHPEVPSLTALWPAANVQEREAFDLMGVKFPGHPDLKRILCPDDFVGHPLRKDFRLQTEGGE.

It belongs to the complex I 30 kDa subunit family. As to quaternary structure, NDH-1 is composed of 14 different subunits. Subunits NuoB, C, D, E, F, and G constitute the peripheral sector of the complex.

Its subcellular location is the cell membrane. The catalysed reaction is a quinone + NADH + 5 H(+)(in) = a quinol + NAD(+) + 4 H(+)(out). NDH-1 shuttles electrons from NADH, via FMN and iron-sulfur (Fe-S) centers, to quinones in the respiratory chain. The immediate electron acceptor for the enzyme in this species is believed to be a menaquinone. Couples the redox reaction to proton translocation (for every two electrons transferred, four hydrogen ions are translocated across the cytoplasmic membrane), and thus conserves the redox energy in a proton gradient. In Moorella thermoacetica (strain ATCC 39073 / JCM 9320), this protein is NADH-quinone oxidoreductase subunit C.